Consider the following 193-residue polypeptide: Chaperone protein TorD (193 aa).

This sequence belongs to the TorD/DmsD family. TorD subfamily.

It is found in the cytoplasm. Its function is as follows. Involved in the biogenesis of TorA. Acts on TorA before the insertion of the molybdenum cofactor and, as a result, probably favors a conformation of the apoenzyme that is competent for acquiring the cofactor. The chain is Chaperone protein TorD from Histophilus somni (strain 129Pt) (Haemophilus somnus).